The primary structure comprises 135 residues: ATP synthase epsilon chain (135 aa).

It belongs to the ATPase epsilon chain family. As to quaternary structure, F-type ATPases have 2 components, CF(1) - the catalytic core - and CF(0) - the membrane proton channel. CF(1) has five subunits: alpha(3), beta(3), gamma(1), delta(1), epsilon(1). CF(0) has three main subunits: a, b and c.

Its subcellular location is the cell inner membrane. Functionally, produces ATP from ADP in the presence of a proton gradient across the membrane. The protein is ATP synthase epsilon chain of Mesorhizobium japonicum (strain LMG 29417 / CECT 9101 / MAFF 303099) (Mesorhizobium loti (strain MAFF 303099)).